Reading from the N-terminus, the 384-residue chain is Interstitial collagenase (384 aa).

A signal peptide spans 1–25; that stretch reads MLSGLWSSILALLGVFLQSVGEFRA. The propeptide at 26 to 88 is activation peptide; that stretch reads ETQEQDVEIV…STCGVPDVGE (63 aa). Residues 79–86 carry the Cysteine switch motif; the sequence is STCGVPDV. Cys81 provides a ligand contact to Zn(2+). The Ca(2+) site is built by Asp113 and Asp129. Zn(2+) is bound by residues His139 and Asp141. Positions 146, 147, 149, and 151 each coordinate Ca(2+). Residue His154 participates in Zn(2+) binding. Residues Gly161, Gly163, and Asp165 each coordinate Ca(2+). His167 contributes to the Zn(2+) binding site. Positions 169, 170, and 172 each coordinate Ca(2+). His189 is a Zn(2+) binding site. The active site involves Glu190. His193 and His199 together coordinate Zn(2+). Positions 218–239 are disordered; sequence LSQDDIDGPSGNPVQPRGPQTP. A disulfide bridge links Cys242 with Cys381. Ca(2+) contacts are provided by Asp249, Gln277, and Asp347. Hemopexin repeat units lie at residues 273–319 and 333–381; these read ELGL…FGFP and KQSM…WFNC.

It belongs to the peptidase M10A family. It depends on Ca(2+) as a cofactor. Zn(2+) serves as cofactor.

It localises to the secreted. The protein localises to the extracellular space. It is found in the extracellular matrix. It catalyses the reaction Cleavage of the triple helix of collagen at about three-quarters of the length of the molecule from the N-terminus, at 775-Gly-|-Ile-776 in the alpha1(I) chain. Cleaves synthetic substrates and alpha-macroglobulins at bonds where P1' is a hydrophobic residue.. Can be activated without removal of the activation peptide. Its function is as follows. Cleaves collagens of types I, II, and III at one site in the helical domain. Also cleaves collagens of types VII and X. The polypeptide is Interstitial collagenase (Aquarana catesbeiana (American bullfrog)).